We begin with the raw amino-acid sequence, 457 residues long: CUB1 family protein C30C2.08 (457 aa).

Coiled coils occupy residues 119 to 174 and 418 to 448; these read TQND…NISK and QELV…EERE.

It belongs to the CUB1 family.

It localises to the cytoplasm. The protein localises to the nucleus. Its function is as follows. Involved in bleomycin tolerance with links to DNA repair and/or proteasome function. The sequence is that of CUB1 family protein C30C2.08 from Schizosaccharomyces pombe (strain 972 / ATCC 24843) (Fission yeast).